The sequence spans 126 residues: UPF0102 protein P9303_16141 (126 aa).

The protein belongs to the UPF0102 family.

The sequence is that of UPF0102 protein P9303_16141 from Prochlorococcus marinus (strain MIT 9303).